An 895-amino-acid chain; its full sequence is MIHKMYFFLILLFSLFIIVYSAPNRVTRNETSIVYTYSLDSDYYTRFVMYLNATTLRTDIAPNYFDCSQIVNSERYCVFHFADSFSRLWGAVYSRVCTRTVSDPTEDCQSTWITDNAFPEPLNVKFSGYPSTSGGDVVFTGLFLRLAGGPNTLANSFTNPSKTFLIKVHGNFSDPNFNCNNFTATFPPSSGYIKVYFDDTGKSSLQLRYASPTVSSFILDESKKLVTINGDNYFTKNSLVQVFFDGIIQNNINITVNHSQIQVNNFIRVDPGPMSVNITINAVSIDNNYTYCFPAVISSISSVSNHLGGVVTIKGSKLSSTSIIPTIKIGDKQCTFIKSTTTELECQLEPNETGGKHLPVDVNFGGCNSTSSGSDAVTFTYSIPTLSSGTLSNGIVTLIGTNLGTINDSFIQLNSNGAIDNVKNDQFNISSDETTATFKLPLLKCKSFYINFTRVDISANNKPSISAPLLIYVINKPTVSNGSINIELYYIDCPISPSSTPSITVGNSSSATQCSIPSLKNLSEYYQTTCSIPYGTGTNKQFKFKYNSEESNSEFSYEPPKVESRSFSKGLFNITINGNNFGNSTSLIKVYFNGSDISSEIQSLNDNQFTFKRLNSYENGPINITVDGNSNMEPSFYLTLPPVIYSIINKENKTIGCGGLITISGKNLLTSDDKFKVRVLANNENTTVIVPDEKTLIVRANNKDSPLFVSTLIGDDLGPNTTLTYFEPRITVIPTVKNKKDGISIRVGGVSLSGIINASLGISSENVSLSCDLQCSLSPNETFYLSNPILSSNEKDITNSTDCLSCHSMNSIVVDETSGVLYLQLGPTSYHYDVKIEEIQSSLNPSSSNGGERKSSKLSGGAIAGITIGCVAGAGALVGSVFYFKLITRVKKAFN.

The N-terminal stretch at 1 to 21 (MIHKMYFFLILLFSLFIIVYS) is a signal peptide. Over 22–861 (APNRVTRNET…ERKSSKLSGG (840 aa)) the chain is Extracellular. N-linked (GlcNAc...) asparagine glycans are attached at residues asparagine 29, asparagine 52, asparagine 171, asparagine 181, asparagine 253, asparagine 257, asparagine 277, asparagine 288, asparagine 351, asparagine 368, asparagine 407, asparagine 428, asparagine 451, asparagine 481, asparagine 507, asparagine 521, asparagine 573, asparagine 583, asparagine 593, asparagine 623, asparagine 652, asparagine 685, asparagine 720, asparagine 757, asparagine 766, asparagine 780, and asparagine 799. In terms of domain architecture, IPT/TIG 1 spans 295 to 381 (AVISSISSVS…SGSDAVTFTY (87 aa)). 2 IPT/TIG domains span residues 560–638 (PKVE…SFYL) and 642–725 (PVIY…TLTY). Residues 862–882 (AIAGITIGCVAGAGALVGSVF) traverse the membrane as a helical segment. At 883–895 (YFKLITRVKKAFN) the chain is on the cytoplasmic side.

The protein localises to the cell membrane. May be involved in the regulation of aggregation. Activates tgrC1. The protein is Tiger protein D1 (tgrD1) of Dictyostelium discoideum (Social amoeba).